The chain runs to 551 residues: Arginine--tRNA ligase (551 aa).

Residues 125-135 (ANPTGPLHIGH) carry the 'HIGH' region motif.

This sequence belongs to the class-I aminoacyl-tRNA synthetase family. As to quaternary structure, monomer.

It is found in the cytoplasm. It carries out the reaction tRNA(Arg) + L-arginine + ATP = L-arginyl-tRNA(Arg) + AMP + diphosphate. This chain is Arginine--tRNA ligase, found in Oleidesulfovibrio alaskensis (strain ATCC BAA-1058 / DSM 17464 / G20) (Desulfovibrio alaskensis).